Here is a 185-residue protein sequence, read N- to C-terminus: Urease accessory protein UreE (185 aa).

Residues 153 to 185 (LRANSAQGHGHSHSHSHDHHGYHHHGDGHWHKH) form a disordered region. Residues 162–175 (GHSHSHSHDHHGYH) show a composition bias toward basic residues. Over residues 176-185 (HHGDGHWHKH) the composition is skewed to basic and acidic residues.

The protein belongs to the UreE family.

The protein resides in the cytoplasm. Functionally, involved in urease metallocenter assembly. Binds nickel. Probably functions as a nickel donor during metallocenter assembly. In Haemophilus influenzae (strain PittEE), this protein is Urease accessory protein UreE.